We begin with the raw amino-acid sequence, 685 residues long: Exocyst complex component 8 (685 aa).

A PH domain is found at 151 to 251; sequence YLVYNGDLTE…WLEILEQTKK (101 aa). The segment covering 254–263 has biased composition (basic and acidic residues); it reads ALNEKQKQEE. A disordered region spans residues 254-273; the sequence is ALNEKQKQEETTPQLPVVPE.

It belongs to the EXO84 family. As to quaternary structure, the exocyst complex is composed of exoc1, exoc2, exoc3, exoc4, exoc5, exoc6, exoc7 and exoc8.

The protein localises to the cytoplasm. It localises to the perinuclear region. It is found in the cell projection. The protein resides in the growth cone. In terms of biological role, component of the exocyst complex involved in the docking of exocytic vesicles with fusion sites on the plasma membrane. The polypeptide is Exocyst complex component 8 (exoc8) (Xenopus laevis (African clawed frog)).